The sequence spans 373 residues: tRNA-specific 2-thiouridylase MnmA (373 aa).

ATP is bound by residues 12–19 (GMSGGVDS) and M38. Residues 98 to 100 (NPD) form an interaction with target base in tRNA region. The Nucleophile role is filled by C103. A disulfide bond links C103 and C200. ATP is bound at residue G128. Residues 150–152 (KDQ) are interaction with tRNA. The Cysteine persulfide intermediate role is filled by C200. An interaction with tRNA region spans residues 312–313 (RY).

Belongs to the MnmA/TRMU family. As to quaternary structure, interacts with TusE.

The protein localises to the cytoplasm. The catalysed reaction is S-sulfanyl-L-cysteinyl-[protein] + uridine(34) in tRNA + AH2 + ATP = 2-thiouridine(34) in tRNA + L-cysteinyl-[protein] + A + AMP + diphosphate + H(+). Functionally, catalyzes the 2-thiolation of uridine at the wobble position (U34) of tRNA(Lys), tRNA(Glu) and tRNA(Gln), leading to the formation of s(2)U34, the first step of tRNA-mnm(5)s(2)U34 synthesis. Sulfur is provided by IscS, via a sulfur-relay system. Binds ATP and its substrate tRNAs. This is tRNA-specific 2-thiouridylase MnmA from Yersinia enterocolitica serotype O:8 / biotype 1B (strain NCTC 13174 / 8081).